The primary structure comprises 305 residues: Putative E3 ubiquitin-protein ligase SINAT1 (305 aa).

An RING-type zinc finger spans residues 57–93 (CPVCTNLMYPPIHQCPNGHTLCSSCKLRVQNTCPTCR). Residues 107–300 (VAESLEVPCR…EELKLRVTGR (194 aa)) are SBD. The segment at 110 to 170 (SLEVPCRYQN…LVDHLKDDHK (61 aa)) adopts an SIAH-type zinc-finger fold. Zn(2+)-binding residues include cysteine 115, cysteine 122, histidine 134, cysteine 138, cysteine 145, cysteine 152, histidine 164, and histidine 169.

The protein belongs to the SINA (Seven in absentia) family. As to quaternary structure, interacts with SINAT6. Interacts with ATG6 and TRAF1A. Interacts with WAV3. Interacts with FREE1. Interacts with ELC/VPS23A.

The protein resides in the endosome. Its subcellular location is the multivesicular body. It localises to the cytoplasmic vesicle. It is found in the autophagosome. It catalyses the reaction S-ubiquitinyl-[E2 ubiquitin-conjugating enzyme]-L-cysteine + [acceptor protein]-L-lysine = [E2 ubiquitin-conjugating enzyme]-L-cysteine + N(6)-ubiquitinyl-[acceptor protein]-L-lysine.. It functions in the pathway protein modification; protein ubiquitination. Functionally, E3 ubiquitin-protein ligase that mediates ubiquitination and subsequent proteasomal degradation of target proteins. E3 ubiquitin ligases accept ubiquitin from an E2 ubiquitin-conjugating enzyme in the form of a thioester and then directly transfers the ubiquitin to targeted substrates. It probably triggers the ubiquitin-mediated degradation of different substrates. Mediates the proteasomal-dependent degradation of ATG6, a component of the autophagosome complex. Requires TRAF1A/MUSE14 and TRAF1B/MUSE13 to target ATG6 for ubiquitination and subsequent regulation of autophagosome assembly. Modulates directly the ubiquitination and proteasomal-dependent degradation of FREE1, a component of the ESCRT-I complex. Modulates directly the ubiquitination and proteasomal-dependent degradation of ELC/VPS23A, a component of the ESCRT-I complex. This is Putative E3 ubiquitin-protein ligase SINAT1 from Arabidopsis thaliana (Mouse-ear cress).